Here is a 324-residue protein sequence, read N- to C-terminus: Rho crystallin (324 aa).

At Thr2 the chain carries N-acetylthreonine. 218–281 (SVLGSHRDRN…SFTPARIKQN (64 aa)) serves as a coordination point for NADP(+).

Belongs to the aldo/keto reductase family. As to quaternary structure, monomer.

The sequence is that of Rho crystallin from Rana temporaria (European common frog).